Reading from the N-terminus, the 199-residue chain is MNILLLLMLLTSIILLVILIFLAYNEIMEKPTSSCITPAPESQSISPDQTTQLQTTTPVTSTPSNPTPTTIIPNLPPTLNPLSEIVSNGDNVLQQQQSLINGDFAASIQLDGNLCISNTKNQSVLWCSNSAELGQAPYFLLLRSDGNMCIQDSHNNPTWCSGVIGGQSPWKATLQSDGDLCINDYLGQELWCATRKLPN.

The N-terminal stretch at 1–25 (MNILLLLMLLTSIILLVILIFLAYN) is a signal peptide. The span at 35 to 48 (CITPAPESQSISPD) shows a compositional bias: polar residues. The tract at residues 35 to 74 (CITPAPESQSISPDQTTQLQTTTPVTSTPSNPTPTTIIPN) is disordered. Residues 49 to 73 (QTTQLQTTTPVTSTPSNPTPTTIIP) are compositionally biased toward low complexity. The 112-residue stretch at 84–195 (EIVSNGDNVL…LGQELWCATR (112 aa)) folds into the Bulb-type lectin domain. Asn-121 carries an N-linked (GlcNAc...) asparagine; by host glycan.

Its subcellular location is the secreted. This is Putative lectin L633 from Acanthamoeba polyphaga (Amoeba).